The primary structure comprises 423 residues: Glucose-1-phosphate adenylyltransferase (423 aa).

Residues Tyr-107, Gly-172, 187–188, and Ser-205 each bind alpha-D-glucose 1-phosphate; that span reads EK.

This sequence belongs to the bacterial/plant glucose-1-phosphate adenylyltransferase family. In terms of assembly, homotetramer.

The enzyme catalyses alpha-D-glucose 1-phosphate + ATP + H(+) = ADP-alpha-D-glucose + diphosphate. It functions in the pathway glycan biosynthesis; glycogen biosynthesis. Involved in the biosynthesis of ADP-glucose, a building block required for the elongation reactions to produce glycogen. Catalyzes the reaction between ATP and alpha-D-glucose 1-phosphate (G1P) to produce pyrophosphate and ADP-Glc. The protein is Glucose-1-phosphate adenylyltransferase of Albidiferax ferrireducens (strain ATCC BAA-621 / DSM 15236 / T118) (Rhodoferax ferrireducens).